Here is a 321-residue protein sequence, read N- to C-terminus: Protein APA1 (321 aa).

The tract at residues 50–70 (SLIEKPERGQTPEGEDPLGKP) is disordered. Residue Lys-54 coordinates substrate. Thr-60 carries the post-translational modification Phosphothreonine. Residues 93–94 (NK), Asn-145, and 151–154 (GSSL) contribute to the substrate site. The active-site Nucleophile is His-158. Substrate contacts are provided by residues Gln-160, 273 to 275 (NST), Met-280, and Lys-284.

The protein belongs to the ATP adenylyltransferase family. As to quaternary structure, monomer. The cofactor is a divalent metal cation. The N-terminus is blocked.

It is found in the cytoplasm. Its subcellular location is the nucleus. It catalyses the reaction ADP + ATP + H(+) = P(1),P(4)-bis(5'-adenosyl) tetraphosphate + phosphate. The enzyme catalyses sulfate + ADP + H(+) = adenosine 5'-phosphosulfate + phosphate. Ap4A phosphorylase catalyzes the phosphorolytic degradation of bis(5'-adenosyl) tetraphosphate (Ap4A) into ADP and ATP. Can also use other Np4N' nucleotides (where N and N' stand for A,C,G or U) as substrates with equal efficiency. Cannot catalyze the reverse reaction. Additionally, this enzyme can also catalyze the phosphorolytic degradation of adenosine 5'-phosphosulfate (AMPS) into ADP and sulfate, the reversible exchange reaction between inorganic phosphate and the beta-phosphate of a nucleoside diphosphate (NDP), and the synthesis of Ap4A from AMPS plus ATP. This chain is Protein APA1, found in Saccharomyces cerevisiae (strain ATCC 204508 / S288c) (Baker's yeast).